We begin with the raw amino-acid sequence, 917 residues long: Hexokinase-2 (917 aa).

At Met1 the chain carries N-acetylmethionine. The mitochondrial-binding peptide (MBP) stretch occupies residues 1 to 16 (MIASHMIACLFTELNQ). 2 consecutive Hexokinase domains span residues 16-458 (QNQV…MVTA) and 464-906 (ADQH…LITA). ATP contacts are provided by residues Arg30 and 84–89 (DLGGTN). The hexokinase small subdomain 1 stretch occupies residues 73–207 (DGTEHGEFLA…DFDIDIVAVV (135 aa)). 84–88 (DLGGT) contacts D-glucose 6-phosphate. D-glucose is bound by residues 155–156 (SF), 172–173 (TK), and 208–209 (ND). Residues 208–447 (NDTVGTMMTC…CDVRFLRSED (240 aa)) are hexokinase large subdomain 1. Asp209 and Thr232 together coordinate D-glucose 6-phosphate. D-glucose contacts are provided by residues Asn235, Glu260, and 291–294 (QLFE). Residue 413–415 (DGS) coordinates D-glucose 6-phosphate. 425–426 (KR) is an ATP binding site. D-glucose 6-phosphate-binding positions include Ser449 and 532–536 (DLGGT). Residues 521–655 (DGTEKGDFLA…EFDLDVVAVV (135 aa)) form a hexokinase small subdomain 2 region. 532–537 (DLGGTN) is an ATP binding site. Residues 603–604 (SF), 620–621 (TK), and 656–657 (ND) contribute to the D-glucose site. The segment at 656 to 895 (NDTVGTMMTC…CDVSFLESED (240 aa)) is hexokinase large subdomain 2. D-glucose 6-phosphate is bound by residues Asp657 and Thr680. Thr680 contributes to the ATP binding site. D-glucose contacts are provided by residues 682 to 683 (SN), Glu708, and 739 to 742 (QRFE). ATP-binding positions include 747 to 748 (GM), 784 to 788 (TKFLS), and 863 to 867 (TLYKL). Residues 861–863 (DGT) and Ser897 contribute to the D-glucose 6-phosphate site.

It belongs to the hexokinase family. In terms of assembly, monomer. Interacts with TIGAR; the interaction increases hexokinase activity in a hypoxia- and HIF1A-dependent manner.

It localises to the mitochondrion outer membrane. The protein localises to the cytoplasm. Its subcellular location is the cytosol. It carries out the reaction a D-hexose + ATP = a D-hexose 6-phosphate + ADP + H(+). The enzyme catalyses D-fructose + ATP = D-fructose 6-phosphate + ADP + H(+). The catalysed reaction is D-glucose + ATP = D-glucose 6-phosphate + ADP + H(+). It functions in the pathway carbohydrate metabolism; hexose metabolism. The protein operates within carbohydrate degradation; glycolysis; D-glyceraldehyde 3-phosphate and glycerone phosphate from D-glucose: step 1/4. Its activity is regulated as follows. Hexokinase activity is specifically inhibited by 2,6-disubstituted glucosamines. In terms of biological role, catalyzes the phosphorylation of hexose, such as D-glucose and D-fructose, to hexose 6-phosphate (D-glucose 6-phosphate and D-fructose 6-phosphate, respectively). Mediates the initial step of glycolysis by catalyzing phosphorylation of D-glucose to D-glucose 6-phosphate. Plays a key role in maintaining the integrity of the outer mitochondrial membrane by preventing the release of apoptogenic molecules from the intermembrane space and subsequent apoptosis. In Rattus norvegicus (Rat), this protein is Hexokinase-2.